A 515-amino-acid polypeptide reads, in one-letter code: Cytochrome P450 monooxygenase ptmJ (515 aa).

The next 4 membrane-spanning stretches (helical) occupy residues 6–26 (LGPF…LFVI), 50–70 (LGVV…LFCV), 82–102 (VFYL…EPVV), and 300–320 (VIIL…LFLH). Residue C449 participates in heme binding.

It belongs to the cytochrome P450 family. Heme is required as a cofactor.

The protein localises to the membrane. The protein operates within secondary metabolite biosynthesis. In terms of biological role, cytochrome P450 monooxygenase; part of the gene cluster that mediates the biosynthesis of the indole diterpenes penitrems. The geranylgeranyl diphosphate (GGPP) synthase ptmG catalyzes the first step in penitrem biosynthesis via conversion of farnesyl pyrophosphate and isopentyl pyrophosphate into geranylgeranyl pyrophosphate (GGPP). Condensation of indole-3-glycerol phosphate with GGPP by the prenyl transferase ptmC then forms 3-geranylgeranylindole (3-GGI). Epoxidation by the FAD-dependent monooxygenase ptmM leads to a epoxidized-GGI that is substrate of the terpene cyclase ptmB for cyclization to yield paspaline. Paspaline is subsequently converted to 13-desoxypaxilline by the cytochrome P450 monooxygenase ptmP, the latter being then converted to paxilline by the cytochrome P450 monooxygenase ptmQ. Paxilline is converted to beta-paxitriol via C-10 ketoreduction by the short-chain dehydrogenase ptmH which can be monoprenylated at the C-20 by the indole diterpene prenyltransferase ptmD. A two-step elimination (acetylation and elimination) process performed by the O-acetyltransferase ptmV and ptmI leads to the production of the prenylated form of penijanthine. The FAD-linked oxidoreductase ptmO then converts the prenylated form of penijanthine into PC-M5 which is in turn transformed into PC-M4 by the aromatic dimethylallyltransferase ptmE. Five sequential oxidative transformations performed by the cytochrome P450 monooxygenases ptmK, ptmU, ptmL, ptmN and ptmJ yield the various penitrem compounds. PtmK, ptmU and ptmM are involved in the formation of the key bicyclic ring of penitrem C via the formation of the intermediates secopenitrem D and penitrem D. PtmL catalyzes the epoxidation of penitrem D and C to yield penitrem B and F, respectively. PtmJ catalyzes the last benzylic hydroxylation to convert penitrem B to prenitrem E and penitrem F to penitrem A. This Penicillium ochrochloron protein is Cytochrome P450 monooxygenase ptmJ.